A 142-amino-acid polypeptide reads, in one-letter code: Small heat shock protein IbpB (142 aa).

Residues 26–137 form the sHSP domain; that stretch reads AGESQSFPPY…APQRIAISER (112 aa).

This sequence belongs to the small heat shock protein (HSP20) family. As to quaternary structure, homodimer. Forms homomultimers of about 100-150 subunits at optimal growth temperatures. Conformation changes to oligomers at high temperatures or high ionic concentrations. The decrease in size of the multimers is accompanied by an increase in chaperone activity.

It is found in the cytoplasm. Associates with aggregated proteins, together with IbpA, to stabilize and protect them from irreversible denaturation and extensive proteolysis during heat shock and oxidative stress. Aggregated proteins bound to the IbpAB complex are more efficiently refolded and reactivated by the ATP-dependent chaperone systems ClpB and DnaK/DnaJ/GrpE. Its activity is ATP-independent. The polypeptide is Small heat shock protein IbpB (Klebsiella pneumoniae (strain 342)).